A 282-amino-acid polypeptide reads, in one-letter code: ESX-1 secretion-associated protein EspG1 (282 aa).

Belongs to the EspG family. In terms of assembly, interacts specifically with ESX-1-dependent PE/PPE proteins.

It localises to the cytoplasm. Part of the ESX-1 / type VII specialized secretion system (T7SS), which exports several proteins including EsxA and EsxB. Specific chaperone for cognate PE/PPE proteins, plays an important role in preventing aggregation of PE/PPE dimers. Also plays a role in DNA conjugation, in at least recipient strain. This Mycolicibacterium smegmatis (strain ATCC 700084 / mc(2)155) (Mycobacterium smegmatis) protein is ESX-1 secretion-associated protein EspG1.